The sequence spans 457 residues: Carboxypeptidase N catalytic chain (457 aa).

The first 23 residues, 1–23 (MPDLPSAFLPLLLLSKFVTPVTF), serve as a signal peptide directing secretion. A Peptidase M14 domain is found at 24 to 338 (RHHRYDDLVR…EALIQFLEQV (315 aa)). Cys-42 and Cys-104 form a disulfide bridge. Residues His-86, Glu-89, and His-216 each coordinate Zn(2+). A disulfide bond links Cys-271 and Cys-311. The active-site Proton donor/acceptor is the Glu-308. Thr-400, Thr-402, and Thr-409 each carry an O-linked (GalNAc...) threonine glycan. The interval 418 to 457 (STTQVHPVQKAPGRGQGSRAKQPRTSRKKDQAAKRHRGPA) is disordered.

It belongs to the peptidase M14 family. Tetramer of two catalytic chains and two glycosylated inactive chains. Zn(2+) serves as cofactor. Plasma. Expressed in liver.

The protein resides in the secreted. It localises to the extracellular space. It carries out the reaction Release of a C-terminal basic amino acid, preferentially lysine.. In terms of biological role, protects the body from potent vasoactive and inflammatory peptides containing C-terminal Arg or Lys (such as kinins or anaphylatoxins) which are released into the circulation. The protein is Carboxypeptidase N catalytic chain (Cpn1) of Rattus norvegicus (Rat).